Here is a 77-residue protein sequence, read N- to C-terminus: Acyl carrier protein (77 aa).

The Carrier domain occupies 2-77; sequence SDVAKRVKEI…DAIDYITEHT (76 aa). An O-(pantetheine 4'-phosphoryl)serine modification is found at serine 37.

The protein belongs to the acyl carrier protein (ACP) family. 4'-phosphopantetheine is transferred from CoA to a specific serine of apo-ACP by AcpS. This modification is essential for activity because fatty acids are bound in thioester linkage to the sulfhydryl of the prosthetic group.

It localises to the cytoplasm. Its pathway is lipid metabolism; fatty acid biosynthesis. In terms of biological role, carrier of the growing fatty acid chain in fatty acid biosynthesis. This is Acyl carrier protein from Trichlorobacter lovleyi (strain ATCC BAA-1151 / DSM 17278 / SZ) (Geobacter lovleyi).